We begin with the raw amino-acid sequence, 448 residues long: Inositol polyphosphate 5-phosphatase K (448 aa).

Residues 16-318 form a catalytic region; the sequence is IHVVTWNVAS…SDHKPVSGTF (303 aa). The required for interaction with GPR78 and PAK1 stretch occupies residues 318–448; sequence FDLELKPLVS…DPLGEAQPQI (131 aa). The segment at 321–448 is required for ruffle localization; sequence ELKPLVSAPL…DPLGEAQPQI (128 aa).

The protein belongs to the inositol 1,4,5-trisphosphate 5-phosphatase type II family. Interacts with GPR78; necessary for INPP5K localization at the endoplasmic reticulum. Interacts with PAK1; competes with GPR78. As to expression, ubiquitously expressed with highest levels in skeletal muscle, heart and kidney.

It localises to the endoplasmic reticulum. The protein localises to the cytoplasm. The catalysed reaction is 1D-myo-inositol 1,4,5-trisphosphate + H2O = 1D-myo-inositol 1,4-bisphosphate + phosphate. The enzyme catalyses 1D-myo-inositol 1,3,4,5-tetrakisphosphate + H2O = 1D-myo-inositol 1,3,4-trisphosphate + phosphate. It catalyses the reaction a 1,2-diacyl-sn-glycero-3-phospho-(1D-myo-inositol-4,5-bisphosphate) + H2O = a 1,2-diacyl-sn-glycero-3-phospho-(1D-myo-inositol 4-phosphate) + phosphate. It carries out the reaction a 1,2-diacyl-sn-glycero-3-phospho-(1D-myo-inositol-3,4,5-trisphosphate) + H2O = a 1,2-diacyl-sn-glycero-3-phospho-(1D-myo-inositol-3,4-bisphosphate) + phosphate. The catalysed reaction is 1,2-dioctanoyl-sn-glycero-3-phospho-(1D-myo-inositol-3,4,5-trisphosphate) + H2O = 1,2-dioctanoyl-sn-glycero-3-phospho-(1D-myo-inositol-3,4-bisphosphate) + phosphate. In terms of biological role, inositol 5-phosphatase which acts on inositol 1,4,5-trisphosphate, inositol 1,3,4,5-tetrakisphosphate, phosphatidylinositol 4,5-bisphosphate and phosphatidylinositol 3,4,5-trisphosphate. Has 6-fold higher affinity for phosphatidylinositol 4,5-bisphosphate than for inositol 1,4,5-trisphosphate. Negatively regulates assembly of the actin cytoskeleton. Controls insulin-dependent glucose uptake among inositol 3,4,5-trisphosphate phosphatases; therefore, is the specific regulator for insulin signaling in skeletal muscle. This chain is Inositol polyphosphate 5-phosphatase K, found in Homo sapiens (Human).